Consider the following 290-residue polypeptide: 4-hydroxy-tetrahydrodipicolinate synthase (290 aa).

T44 serves as a coordination point for pyruvate. Y132 functions as the Proton donor/acceptor in the catalytic mechanism. K160 (schiff-base intermediate with substrate) is an active-site residue. I202 lines the pyruvate pocket.

This sequence belongs to the DapA family. As to quaternary structure, homotetramer; dimer of dimers.

It localises to the cytoplasm. The catalysed reaction is L-aspartate 4-semialdehyde + pyruvate = (2S,4S)-4-hydroxy-2,3,4,5-tetrahydrodipicolinate + H2O + H(+). The protein operates within amino-acid biosynthesis; L-lysine biosynthesis via DAP pathway; (S)-tetrahydrodipicolinate from L-aspartate: step 3/4. Catalyzes the condensation of (S)-aspartate-beta-semialdehyde [(S)-ASA] and pyruvate to 4-hydroxy-tetrahydrodipicolinate (HTPA). This Geobacter sp. (strain M21) protein is 4-hydroxy-tetrahydrodipicolinate synthase.